We begin with the raw amino-acid sequence, 166 residues long: Phosphopantetheine adenylyltransferase (166 aa).

S9 is a binding site for substrate. Residues 9 to 10 (SF) and H17 each bind ATP. K41, L74, and K88 together coordinate substrate. ATP is bound by residues 89 to 91 (GLR), E99, and 123 to 129 (YIHLSST).

This sequence belongs to the bacterial CoaD family. As to quaternary structure, homohexamer. Mg(2+) serves as cofactor.

The protein localises to the cytoplasm. It catalyses the reaction (R)-4'-phosphopantetheine + ATP + H(+) = 3'-dephospho-CoA + diphosphate. The protein operates within cofactor biosynthesis; coenzyme A biosynthesis; CoA from (R)-pantothenate: step 4/5. Reversibly transfers an adenylyl group from ATP to 4'-phosphopantetheine, yielding dephospho-CoA (dPCoA) and pyrophosphate. This is Phosphopantetheine adenylyltransferase from Pseudarthrobacter chlorophenolicus (strain ATCC 700700 / DSM 12829 / CIP 107037 / JCM 12360 / KCTC 9906 / NCIMB 13794 / A6) (Arthrobacter chlorophenolicus).